Here is a 242-residue protein sequence, read N- to C-terminus: ATP synthase subunit a (242 aa).

6 consecutive transmembrane segments (helical) span residues 29-49 (SSIY…LAFY), 84-104 (FIPL…LGMT), 114-134 (IIVT…VGFV), 140-160 (FLTL…MIVI), 189-209 (VIAG…IPLM), and 210-230 (VILI…FTIL).

It belongs to the ATPase A chain family. As to quaternary structure, F-type ATPases have 2 components, CF(1) - the catalytic core - and CF(0) - the membrane proton channel. CF(1) has five subunits: alpha(3), beta(3), gamma(1), delta(1), epsilon(1). CF(0) has three main subunits: a(1), b(2) and c(9-12). The alpha and beta chains form an alternating ring which encloses part of the gamma chain. CF(1) is attached to CF(0) by a central stalk formed by the gamma and epsilon chains, while a peripheral stalk is formed by the delta and b chains.

It localises to the cell inner membrane. Functionally, key component of the proton channel; it plays a direct role in the translocation of protons across the membrane. The chain is ATP synthase subunit a from Rickettsia felis (strain ATCC VR-1525 / URRWXCal2) (Rickettsia azadi).